We begin with the raw amino-acid sequence, 147 residues long: Protein phosphatase 1 regulatory subunit 14A (147 aa).

Positions 1–11 are enriched in basic residues; the sequence is MAAQRLGKRVL. Residues 1–36 are disordered; sequence MAAQRLGKRVLSKLQSPSRARGPGGSPSGLQKRHAR. The residue at position 26 (S26) is a Phosphoserine. Positions 35 to 120 are inhibitory; it reads ARVTVKYDRR…LLAKLRGLHK (86 aa). T38 carries the phosphothreonine; by PKC modification. The disordered stretch occupies residues 118-147; sequence LHKQPGFPQPSPSDDPSLSPRQDRAHTAPP. Phosphoserine occurs at positions 128, 134, and 136. Basic and acidic residues predominate over residues 138–147; that stretch reads RQDRAHTAPP.

It belongs to the PP1 inhibitor family.

Its subcellular location is the cytoplasm. Inhibitor of PPP1CA. Has over 1000-fold higher inhibitory activity when phosphorylated, creating a molecular switch for regulating the phosphorylation status of PPP1CA substrates and smooth muscle contraction. The polypeptide is Protein phosphatase 1 regulatory subunit 14A (Ppp1r14a) (Mus musculus (Mouse)).